A 28-amino-acid polypeptide reads, in one-letter code: Alkaline serine protease NJP (28 aa).

Its activity is regulated as follows. Inhibited by PMSF. Not or very weakly inhibited by EDTA, EGTA, beta-mercaptoethanol, benzamidine, aprotinin, iodoacetic acid, pepstatin A and SBTI. Alkaline thrombin-like serine protease. Has fibrinolytic and fibrinogenolytic but not plasminogenolytic activity. Cleaves fibrinogen chains Aalpha, Bbeta and gamma chains in that order. Cleaves after Arg and Lys residues. The polypeptide is Alkaline serine protease NJP (Hediste japonica (Polychaete worm)).